The chain runs to 149 residues: Protein Rv2250A (149 aa).

This chain is Protein Rv2250A, found in Mycobacterium tuberculosis (strain ATCC 25618 / H37Rv).